A 426-amino-acid chain; its full sequence is Probable imidazolonepropionase (426 aa).

2 residues coordinate 4-imidazolone-5-propanoate: tyrosine 159 and histidine 192. Tyrosine 159 contributes to the N-formimidoyl-L-glutamate binding site. Histidine 260 serves as a coordination point for Fe(3+). Residue histidine 260 participates in Zn(2+) binding. A 4-imidazolone-5-propanoate-binding site is contributed by glutamate 263. Aspartate 334 serves as a coordination point for Fe(3+). Residue aspartate 334 coordinates Zn(2+). Residue asparagine 336 participates in N-formimidoyl-L-glutamate binding.

It belongs to the metallo-dependent hydrolases superfamily. HutI family. Zn(2+) serves as cofactor. Fe(3+) is required as a cofactor.

The enzyme catalyses 4-imidazolone-5-propanoate + H2O = N-formimidoyl-L-glutamate. Its pathway is amino-acid degradation; L-histidine degradation into L-glutamate; N-formimidoyl-L-glutamate from L-histidine: step 3/3. The polypeptide is Probable imidazolonepropionase (AMDHD1) (Homo sapiens (Human)).